The chain runs to 872 residues: Translation initiation factor IF-2 (872 aa).

The span at alanine 130–alanine 155 shows a compositional bias: basic and acidic residues. A disordered region spans residues alanine 130 to glutamine 282. The segment covering glutamate 156–proline 181 has biased composition (low complexity). Positions alanine 182–proline 194 are enriched in pro residues. The segment covering lysine 195–arginine 211 has biased composition (low complexity). Over residues arginine 271–glutamine 282 the composition is skewed to basic and acidic residues. A tr-type G domain is found at threonine 371–aspartate 539. Positions glycine 380–threonine 387 are G1. Glycine 380–threonine 387 lines the GTP pocket. The G2 stretch occupies residues glycine 405–histidine 409. Residues aspartate 427–glycine 430 are G3. GTP-binding positions include aspartate 427–histidine 431 and asparagine 481–aspartate 484. Residues asparagine 481–aspartate 484 are G4. The G5 stretch occupies residues serine 517–lysine 519.

The protein belongs to the TRAFAC class translation factor GTPase superfamily. Classic translation factor GTPase family. IF-2 subfamily.

The protein resides in the cytoplasm. In terms of biological role, one of the essential components for the initiation of protein synthesis. Protects formylmethionyl-tRNA from spontaneous hydrolysis and promotes its binding to the 30S ribosomal subunits. Also involved in the hydrolysis of GTP during the formation of the 70S ribosomal complex. This Paramagnetospirillum magneticum (strain ATCC 700264 / AMB-1) (Magnetospirillum magneticum) protein is Translation initiation factor IF-2.